A 368-amino-acid chain; its full sequence is 3-dehydroquinate synthase (368 aa).

NAD(+) contacts are provided by residues Gly112–Asp116, Thr136–Thr137, Lys149, Lys158, and Thr176–Thr179. Zn(2+) is bound by residues Glu191, His256, and His273.

The protein belongs to the sugar phosphate cyclases superfamily. Dehydroquinate synthase family. Requires Co(2+) as cofactor. The cofactor is Zn(2+). It depends on NAD(+) as a cofactor.

Its subcellular location is the cytoplasm. The enzyme catalyses 7-phospho-2-dehydro-3-deoxy-D-arabino-heptonate = 3-dehydroquinate + phosphate. It participates in metabolic intermediate biosynthesis; chorismate biosynthesis; chorismate from D-erythrose 4-phosphate and phosphoenolpyruvate: step 2/7. Catalyzes the conversion of 3-deoxy-D-arabino-heptulosonate 7-phosphate (DAHP) to dehydroquinate (DHQ). This Prochlorococcus marinus (strain NATL2A) protein is 3-dehydroquinate synthase.